Reading from the N-terminus, the 270-residue chain is Indole-3-glycerol phosphate synthase (270 aa).

It belongs to the TrpC family.

The catalysed reaction is 1-(2-carboxyphenylamino)-1-deoxy-D-ribulose 5-phosphate + H(+) = (1S,2R)-1-C-(indol-3-yl)glycerol 3-phosphate + CO2 + H2O. It participates in amino-acid biosynthesis; L-tryptophan biosynthesis; L-tryptophan from chorismate: step 4/5. This is Indole-3-glycerol phosphate synthase from Salinibacter ruber (strain DSM 13855 / M31).